A 209-amino-acid polypeptide reads, in one-letter code: MDWGNVTVDDLFDALREVDWSSPPRPPSEFFSRFTVPKSVPKWDSRLKCNLYYYRTNYFIMIVVILGLGVLTRPLAIFAALLTALSLAFLNDSFAGSFSEKATRTVRRFSPQLAAKMRPPLTPVTRGRPSSKRAIHVCGQPRWVFVLTCSLVSFALWYISSGLLRVSVALLIAHLATILHASLRTPNLKARFNTFREEFRAVWRNYSEI.

4 helical membrane-spanning segments follow: residues 51–73 (LYYY…VLTR), 77–99 (IFAA…GSFS), 144–164 (VFVL…SGLL), and 166–186 (VSVA…LRTP).

It belongs to the PRA1 family.

It localises to the endoplasmic reticulum membrane. Functionally, may be involved in both secretory and endocytic intracellular trafficking in the endosomal/prevacuolar compartments. This Arabidopsis thaliana (Mouse-ear cress) protein is PRA1 family protein A1 (PRA1A1).